Reading from the N-terminus, the 369-residue chain is Queuine tRNA-ribosyltransferase (369 aa).

Asp-89 serves as the catalytic Proton acceptor. Substrate is bound by residues 89–93, Asp-142, Gln-184, and Gly-211; that span reads DSGGF. Residues 242 to 248 form an RNA binding region; the sequence is GGGSPEL. The active-site Nucleophile is Asp-261. Positions 266-270 are RNA binding; important for wobble base 34 recognition; sequence TRIAR. The Zn(2+) site is built by Cys-299, Cys-301, Cys-304, and His-330.

This sequence belongs to the queuine tRNA-ribosyltransferase family. In terms of assembly, homodimer. Within each dimer, one monomer is responsible for RNA recognition and catalysis, while the other monomer binds to the replacement base PreQ1. Zn(2+) is required as a cofactor.

It catalyses the reaction 7-aminomethyl-7-carbaguanine + guanosine(34) in tRNA = 7-aminomethyl-7-carbaguanosine(34) in tRNA + guanine. It participates in tRNA modification; tRNA-queuosine biosynthesis. Its function is as follows. Catalyzes the base-exchange of a guanine (G) residue with the queuine precursor 7-aminomethyl-7-deazaguanine (PreQ1) at position 34 (anticodon wobble position) in tRNAs with GU(N) anticodons (tRNA-Asp, -Asn, -His and -Tyr). Catalysis occurs through a double-displacement mechanism. The nucleophile active site attacks the C1' of nucleotide 34 to detach the guanine base from the RNA, forming a covalent enzyme-RNA intermediate. The proton acceptor active site deprotonates the incoming PreQ1, allowing a nucleophilic attack on the C1' of the ribose to form the product. After dissociation, two additional enzymatic reactions on the tRNA convert PreQ1 to queuine (Q), resulting in the hypermodified nucleoside queuosine (7-(((4,5-cis-dihydroxy-2-cyclopenten-1-yl)amino)methyl)-7-deazaguanosine). The protein is Queuine tRNA-ribosyltransferase of Thermotoga maritima (strain ATCC 43589 / DSM 3109 / JCM 10099 / NBRC 100826 / MSB8).